We begin with the raw amino-acid sequence, 611 residues long: E-selectin (611 aa).

The signal sequence occupies residues 1–22 (MITSQLLPALTLVLLLFKEGGA). Residues 23–140 (WSYNASTEAM…CDKKKLALCY (118 aa)) enclose the C-type lectin domain. The Extracellular segment spans residues 23–557 (WSYNASTEAM…CEAPTESSIP (535 aa)). Asn-26 is a glycosylation site (N-linked (GlcNAc...) asparagine). Intrachain disulfides connect Cys-41/Cys-139, Cys-112/Cys-131, Cys-144/Cys-155, Cys-149/Cys-164, Cys-166/Cys-175, Cys-181/Cys-225, Cys-194/Cys-207, Cys-211/Cys-238, Cys-243/Cys-287, Cys-256/Cys-269, Cys-273/Cys-300, Cys-305/Cys-350, Cys-336/Cys-363, Cys-368/Cys-413, Cys-399/Cys-426, Cys-431/Cys-476, Cys-462/Cys-489, Cys-494/Cys-535, and Cys-521/Cys-548. Ca(2+)-binding residues include Glu-102, Asn-104, and Glu-110. Residues 102–110 (EPNNKQNDE), 114–119 (EIYIKR), and 127–129 (NDE) each bind a carbohydrate. Positions 127 and 128 each coordinate Ca(2+). Residues 141 to 176 (TAACTPTSCSGHGECVETVNNYTCKCHPGFRGLRCE) form the EGF-like domain. N-linked (GlcNAc...) asparagine glycosylation occurs at Asn-161. 2 Sushi domains span residues 179–240 (VTCQ…ACNV) and 241–302 (VECS…TCKA). N-linked (GlcNAc...) asparagine glycosylation is present at Asn-204. Asn-266 carries an N-linked (GlcNAc...) asparagine glycan. 2 N-linked (GlcNAc...) asparagine glycosylation sites follow: Asn-313 and Asn-333. 4 Sushi domains span residues 316–365 (VSCS…VCKA), 367–428 (QCKA…TCEA), 430–491 (KCDA…SCQV), and 492–550 (VQCF…TCEA). The N-linked (GlcNAc...) asparagine glycan is linked to Asn-528. A helical membrane pass occupies residues 558–579 (LAVGLTAGGTSLLTVASFLLWL). The Cytoplasmic portion of the chain corresponds to 580–611 (LKRLRKRAKKFVPASSCQSLQSDGSYHMPCSI).

It belongs to the selectin/LECAM family. In terms of assembly, interacts with SELPLG/PSGL1 and PODXL2 through the sialyl Lewis X epitope. SELPLG sulfation appears not to be required for this interaction.

The protein resides in the cell membrane. Functionally, cell-surface glycoprotein having a role in immunoadhesion. Mediates in the adhesion of blood neutrophils in cytokine-activated endothelium through interaction with SELPLG/PSGL1. May have a role in capillary morphogenesis. This Canis lupus familiaris (Dog) protein is E-selectin (SELE).